A 468-amino-acid polypeptide reads, in one-letter code: UDP-glycosyltransferase 89B2 (468 aa).

UDP-alpha-D-glucose-binding positions include serine 287, 347 to 348 (WV), 365 to 373 (HCGWNSVME), and 387 to 390 (SADQ).

Belongs to the UDP-glycosyltransferase family.

In terms of biological role, may glycosylate diterpenes or flavonols in leaves. The protein is UDP-glycosyltransferase 89B2 of Stevia rebaudiana (Stevia).